The sequence spans 267 residues: MENLYALILGIIEGLTEFLPISSTGHMILGTTILGIDIDEFWKSFLIIIQLGSILAVIFVFWRKLFQGLDIWLKLAVGFFPTGVIGLFVAKYLNALFNGWVVVGMLIFGGVVFILIELAHKNKQYRINSLEEISFKQAFCIGIFQSLAMIPGTSRSGASIIGGLLLEFNRKVAAEFSFLLAIPTMIIATAYSIYKEPELLGNANSLIPLGIGFITAFIVAVLVIKFFLKFISKFDFIPFGIYRIILGFVFFYLYYSGILNAGSEFKL.

Helical transmembrane passes span 4–24, 41–61, 69–89, 96–116, 173–193, 207–227, and 239–259; these read LYAL…ISST, FWKS…IFVF, LDIW…GLFV, LFNG…FILI, AAEF…AYSI, IPLG…IKFF, and FGIY…SGIL.

It belongs to the UppP family.

It is found in the cell inner membrane. The catalysed reaction is di-trans,octa-cis-undecaprenyl diphosphate + H2O = di-trans,octa-cis-undecaprenyl phosphate + phosphate + H(+). In terms of biological role, catalyzes the dephosphorylation of undecaprenyl diphosphate (UPP). Confers resistance to bacitracin. The chain is Undecaprenyl-diphosphatase from Campylobacter jejuni subsp. jejuni serotype O:2 (strain ATCC 700819 / NCTC 11168).